Here is a 512-residue protein sequence, read N- to C-terminus: Probable cytosol aminopeptidase (512 aa).

Residues lysine 284 and aspartate 289 each contribute to the Mn(2+) site. Residue lysine 296 is part of the active site. Residues aspartate 307, aspartate 366, and glutamate 368 each contribute to the Mn(2+) site. Residue arginine 370 is part of the active site.

Belongs to the peptidase M17 family. It depends on Mn(2+) as a cofactor.

The protein localises to the cytoplasm. It catalyses the reaction Release of an N-terminal amino acid, Xaa-|-Yaa-, in which Xaa is preferably Leu, but may be other amino acids including Pro although not Arg or Lys, and Yaa may be Pro. Amino acid amides and methyl esters are also readily hydrolyzed, but rates on arylamides are exceedingly low.. The catalysed reaction is Release of an N-terminal amino acid, preferentially leucine, but not glutamic or aspartic acids.. Presumably involved in the processing and regular turnover of intracellular proteins. Catalyzes the removal of unsubstituted N-terminal amino acids from various peptides. This chain is Probable cytosol aminopeptidase, found in Cupriavidus necator (strain ATCC 17699 / DSM 428 / KCTC 22496 / NCIMB 10442 / H16 / Stanier 337) (Ralstonia eutropha).